The following is a 461-amino-acid chain: Photosystem II CP43 reaction center protein (461 aa).

A propeptide spanning residues 1–2 is cleaved from the precursor; sequence ME. Residue threonine 3 is modified to N-acetylthreonine. The residue at position 3 (threonine 3) is a Phosphothreonine. 5 consecutive transmembrane segments (helical) span residues 57-81, 122-143, 166-188, 243-263, and 279-300; these read LFEVAHFVPEKPMYEQGLILLPHLA, LLGPETLEESFPFFGYVWKDRN, KASYFGGIYDTWAPGGGDVRKIT, KPFAWARRALVWSGEAYLSYS, and WFNNTAYPSEFYGPTGPEASQA. Glutamate 355 lines the [CaMn4O5] cluster pocket. A helical transmembrane segment spans residues 435-459; it reads RARAAAAGFEKGIDRDFEPVLSMTP.

The protein belongs to the PsbB/PsbC family. PsbC subfamily. As to quaternary structure, PSII is composed of 1 copy each of membrane proteins PsbA, PsbB, PsbC, PsbD, PsbE, PsbF, PsbH, PsbI, PsbJ, PsbK, PsbL, PsbM, PsbT, PsbX, PsbY, PsbZ, Psb30/Ycf12, at least 3 peripheral proteins of the oxygen-evolving complex and a large number of cofactors. It forms dimeric complexes. Binds multiple chlorophylls and provides some of the ligands for the Ca-4Mn-5O cluster of the oxygen-evolving complex. It may also provide a ligand for a Cl- that is required for oxygen evolution. PSII binds additional chlorophylls, carotenoids and specific lipids. is required as a cofactor.

It localises to the plastid. The protein resides in the chloroplast thylakoid membrane. Functionally, one of the components of the core complex of photosystem II (PSII). It binds chlorophyll and helps catalyze the primary light-induced photochemical processes of PSII. PSII is a light-driven water:plastoquinone oxidoreductase, using light energy to abstract electrons from H(2)O, generating O(2) and a proton gradient subsequently used for ATP formation. The chain is Photosystem II CP43 reaction center protein from Lotus japonicus (Lotus corniculatus var. japonicus).